We begin with the raw amino-acid sequence, 446 residues long: Tubulin beta-6 chain (446 aa).

The MREI motif motif lies at 1-4 (MREI). GTP is bound by residues glutamine 11, glutamate 69, serine 138, glycine 142, threonine 143, glycine 144, asparagine 204, and asparagine 226. Mg(2+) is bound at residue glutamate 69. Positions 419–446 (VSEYQQYQDATADVEEYEEAEASPEKET) are disordered. Residues 430-440 (ADVEEYEEAEA) show a composition bias toward acidic residues.

It belongs to the tubulin family. As to quaternary structure, dimer of alpha and beta chains. A typical microtubule is a hollow water-filled tube with an outer diameter of 25 nm and an inner diameter of 15 nM. Alpha-beta heterodimers associate head-to-tail to form protofilaments running lengthwise along the microtubule wall with the beta-tubulin subunit facing the microtubule plus end conferring a structural polarity. Microtubules usually have 13 protofilaments but different protofilament numbers can be found in some organisms and specialized cells. Mg(2+) is required as a cofactor. Some glutamate residues at the C-terminus are polyglycylated, resulting in polyglycine chains on the gamma-carboxyl group. Glycylation is mainly limited to tubulin incorporated into axonemes (cilia and flagella) whereas glutamylation is prevalent in neuronal cells, centrioles, axonemes, and the mitotic spindle. Both modifications can coexist on the same protein on adjacent residues, and lowering polyglycylation levels increases polyglutamylation, and reciprocally. The precise function of polyglycylation is still unclear. Post-translationally, some glutamate residues at the C-terminus are polyglutamylated, resulting in polyglutamate chains on the gamma-carboxyl group. Polyglutamylation plays a key role in microtubule severing by spastin (SPAST). SPAST preferentially recognizes and acts on microtubules decorated with short polyglutamate tails: severing activity by SPAST increases as the number of glutamates per tubulin rises from one to eight, but decreases beyond this glutamylation threshold. Highly expressed in bone marrow.

It localises to the cytoplasm. It is found in the cytoskeleton. Functionally, tubulin is the major constituent of microtubules, a cylinder consisting of laterally associated linear protofilaments composed of alpha- and beta-tubulin heterodimers. Microtubules grow by the addition of GTP-tubulin dimers to the microtubule end, where a stabilizing cap forms. Below the cap, tubulin dimers are in GDP-bound state, owing to GTPase activity of alpha-tubulin. The polypeptide is Tubulin beta-6 chain (Gallus gallus (Chicken)).